Here is a 38-residue protein sequence, read N- to C-terminus: Potassium channel toxin alpha-KTx 2.21 (38 aa).

Disulfide bonds link Cys-7/Cys-29, Cys-13/Cys-34, and Cys-17/Cys-36.

In terms of tissue distribution, expressed by the venom gland.

The protein resides in the secreted. Functionally, inhibits human voltage-gated potassium (Kv) channels Kv1.2/KCNA2 and Kv1.3/KCNA3. Does not block human Kv1.1/KCNA1 at 100nM concentration. In Centruroides bonito (Scorpion), this protein is Potassium channel toxin alpha-KTx 2.21.